The primary structure comprises 213 residues: Kynurenine formamidase (213 aa).

Trp-18 serves as a coordination point for substrate. His-48, His-52, and Asp-54 together coordinate Zn(2+). The active-site Proton donor/acceptor is His-58. Residues His-160 and Glu-172 each coordinate Zn(2+).

It belongs to the Cyclase 1 superfamily. KynB family. As to quaternary structure, homodimer. It depends on Zn(2+) as a cofactor.

It catalyses the reaction N-formyl-L-kynurenine + H2O = L-kynurenine + formate + H(+). It participates in amino-acid degradation; L-tryptophan degradation via kynurenine pathway; L-kynurenine from L-tryptophan: step 2/2. Catalyzes the hydrolysis of N-formyl-L-kynurenine to L-kynurenine, the second step in the kynurenine pathway of tryptophan degradation. The sequence is that of Kynurenine formamidase from Burkholderia vietnamiensis (strain G4 / LMG 22486) (Burkholderia cepacia (strain R1808)).